The following is a 437-amino-acid chain: Chromosomal replication initiator protein DnaA (437 aa).

The domain I, interacts with DnaA modulators stretch occupies residues 1-82; that stretch reads MIFPIWKKCL…KIIINIEKKK (82 aa). Positions 82–101 are domain II; sequence KLEKKKCIYKKKNIQIYLHS. The domain III, AAA+ region stretch occupies residues 102–318; the sequence is EINKKYQFHN…GILKKIQILS (217 aa). Positions 146, 148, 149, and 150 each coordinate ATP. The domain IV, binds dsDNA stretch occupies residues 319–437; the sequence is ILNKEKITIN…FIYLFNQLNA (119 aa).

It belongs to the DnaA family. Oligomerizes as a right-handed, spiral filament on DNA at oriC.

It is found in the cytoplasm. Plays an essential role in the initiation and regulation of chromosomal replication. ATP-DnaA binds to the origin of replication (oriC) to initiate formation of the DNA replication initiation complex once per cell cycle. Binds the DnaA box (a 9 base pair repeat at the origin) and separates the double-stranded (ds)DNA. Forms a right-handed helical filament on oriC DNA; dsDNA binds to the exterior of the filament while single-stranded (ss)DNA is stabiized in the filament's interior. The ATP-DnaA-oriC complex binds and stabilizes one strand of the AT-rich DNA unwinding element (DUE), permitting loading of DNA polymerase. After initiation quickly degrades to an ADP-DnaA complex that is not apt for DNA replication. Binds acidic phospholipids. This chain is Chromosomal replication initiator protein DnaA, found in Buchnera aphidicola subsp. Cinara cedri (strain Cc).